Consider the following 102-residue polypeptide: Large ribosomal subunit protein bL21 (102 aa).

This sequence belongs to the bacterial ribosomal protein bL21 family. Part of the 50S ribosomal subunit. Contacts protein L20.

Its function is as follows. This protein binds to 23S rRNA in the presence of protein L20. In Bacillus subtilis (strain 168), this protein is Large ribosomal subunit protein bL21.